A 1279-amino-acid chain; its full sequence is Myosin-1 (1279 aa).

Basic residues predominate over residues 1 to 12 (MAIVKRGGRTRA). Positions 1-25 (MAIVKRGGRTRAKQQQAPAKVNNGL) are disordered. Residues 48-736 (VGVSDLTLLS…TLFALEDMRD (689 aa)) form the Myosin motor domain. Residue 141–148 (GESGAGKT) participates in ATP binding. Ser-371 carries the post-translational modification Phosphoserine. The actin-binding stretch occupies residues 419–502 (SIGILDIYGF…PGLFAALNDS (84 aa)). 2 IQ domains span residues 740 to 760 (HNMA…KEDA) and 761 to 786 (AKTI…YGNS). In terms of domain architecture, TH1 spans 794–984 (RRRFSMLGSR…SGTVTVNQGL (191 aa)). 2 stretches are compositionally biased toward polar residues: residues 980 to 989 (VNQGLPPTSK) and 1018 to 1027 (AFQSQPTASY). Disordered stretches follow at residues 980–1001 (VNQG…LGKV), 1014–1132 (LAQP…PKHP), 1189–1216 (SPSA…SSNT), and 1253–1279 (LADA…DDDW). Low complexity-rich tracts occupy residues 1038-1056 (TQLY…PTRT) and 1067-1095 (STQT…KKIA). Residues 1116 to 1126 (APPPPPPPPAL) show a composition bias toward pro residues. An SH3 domain is found at 1129–1189 (PKHPTYRAMY…PIDYLQEESS (61 aa)). The segment covering 1189 to 1209 (SPSASAATQSYAPTTASSNPV) has biased composition (polar residues). The segment covering 1268–1279 (SDAEDDDDDDDW) has biased composition (acidic residues).

The protein belongs to the TRAFAC class myosin-kinesin ATPase superfamily. Myosin family. Phosphorylation of the TEDS site (Ser-371) is required for the polarization of the actin cytoskeleton. Phosphorylation probably activates the myosin-I ATPase activity.

Its subcellular location is the cytoplasm. The protein resides in the cytoskeleton. It localises to the actin patch. Functionally, type-I myosin implicated in the organization of the actin cytoskeleton. Required for proper actin cytoskeleton polarization. At the cell cortex, assembles in patch-like structures together with proteins from the actin-polymerizing machinery and promotes actin assembly. Functions as actin nucleation-promoting factor (NPF) for the Arp2/3 complex. The polypeptide is Myosin-1 (MYO1) (Lodderomyces elongisporus (strain ATCC 11503 / CBS 2605 / JCM 1781 / NBRC 1676 / NRRL YB-4239) (Yeast)).